The following is a 1143-amino-acid chain: Disease resistance protein Pik-1 (1143 aa).

The interval 1–190 is structured coiled coil (CC) domain; it reads MEAAAMAVTA…PLRIMGGEMQ (190 aa). Residues 189–258 enclose the HMA domain; that stretch reads MQKIVFKIPM…KVGHAELLQV (70 aa). Residues 191–264 are HMA-like domain; it reads KIVFKIPMVD…LLQVSQVKED (74 aa). Positions 282–570 constitute an NB-ARC domain; that stretch reads HEVKTICILG…WIAEGFVSEE (289 aa). 10 LRR repeats span residues 681-706, 708-731, 732-754, 756-777, 778-800, 802-823, 824-848, 945-968, 979-1002, and 1004-1027; these read FKRL…ICEQ, SLRV…MRKL, KHLE…IGEL, HLRI…IREL, QHLH…VGKL, NLKI…IGEL, NHLQ…QISQ, MPNL…INGT, DSRL…EFKF, and AGPA…VFRC.

The protein belongs to the disease resistance NB-LRR family. In terms of assembly, interacts with AVR-Pik through its N-terminal part containing the HMA-like domain.

In terms of biological role, disease resistance (R) protein that specifically recognizes the AVR-Pik effector avirulence protein from M.oryzae. Resistance proteins guard the plant against pathogens that contain an appropriate avirulence protein via an indirect interaction with this avirulence protein. That triggers a defense system including the hypersensitive response, which restricts the pathogen growth. Contribution of Pik-2 is required to recognize the effector avirulence protein AVR-Pik. The polypeptide is Disease resistance protein Pik-1 (Oryza sativa subsp. japonica (Rice)).